The primary structure comprises 144 residues: Large ribosomal subunit protein uL15 (144 aa).

Residues 1-58 form a disordered region; that stretch reads MRLNTLAPAAGSKHAPKRVGRGIGSGLGKTGGRGHKGQKSRSGGKVRPGFEGGQMPLK. Gly residues predominate over residues 21–31; it reads RGIGSGLGKTG. The segment covering 32–44 has biased composition (basic residues); it reads GRGHKGQKSRSGG.

This sequence belongs to the universal ribosomal protein uL15 family. Part of the 50S ribosomal subunit.

Functionally, binds to the 23S rRNA. The chain is Large ribosomal subunit protein uL15 from Vibrio parahaemolyticus serotype O3:K6 (strain RIMD 2210633).